The primary structure comprises 227 residues: MLSMFMYNNIVDYVDDIDNGIVQDIEDEASNNVDHDYVYPLPENMVYRFDKSTNILDYLSTERDHVMMAVRYYMSKQRLDDLYRQLPTKTRSYIDIINIYCDKVSNDYNRDMNIIHDMASTESFTVYDINNEVNTMLMDNKGLGVRLATISFITELGRRCMNPVETIKMFTLLSHTICDDCFVDYITDISTPRDNATTNSSTREYLKLMGIAVIMFATYKTLKYMIG.

Belongs to the orthopoxvirus OPG045 family. As to quaternary structure, homodimer. Interacts with host pro-apoptotic protein BCL2L11 (via BH3 domain). Interacts with host NLRP1. Interacts with host BAK.

The protein localises to the host mitochondrion outer membrane. It localises to the host cytoplasm. In terms of biological role, plays a role in evading host innate immune response by inhibiting host inflammasome activation. Interacts with and inhibits NLR-mediated interleukin-1 beta/IL1B production in infected cells. At the host mitochondria outer membrane, interacts with the BH3 domain of host BAK and prevents BAK from binding active BAX. In turn, host apoptosis is inhibited. In Oryctolagus cuniculus (Rabbit), this protein is Apoptosis regulator OPG045 (OPG045).